Reading from the N-terminus, the 413-residue chain is Serine/threonine-protein phosphatase 2A 55 kDa regulatory subunit B beta isoform (413 aa).

4 WD repeats span residues 1–31, 57–98, 141–179, and 190–230; these read EFNH…KNQV, EIEE…KRPE, AHTY…QSFN, and ELTE…LCDR. The residue at position 245 (Ser245) is a Phosphoserine. WD repeat units follow at residues 249–287, 304–345, and 380–412; these read EIIS…RPIE, ENDC…DVTL, and DFSK…QDKV. At Tyr265 the chain carries Phosphotyrosine. Thr268 bears the Phosphothreonine mark.

The protein belongs to the phosphatase 2A regulatory subunit B family. In terms of assembly, PP2A consists of a common heterodimeric core enzyme, composed of a 36 kDa catalytic subunit (subunit C) and a 65 kDa constant regulatory subunit (PR65 or subunit A), that associates with a variety of regulatory subunits. Proteins that associate with the core dimer include three families of regulatory subunits B (the R2/B/PR55/B55, R3/B''/PR72/PR130/PR59 and R5/B'/B56 families), the 48 kDa variable regulatory subunit, viral proteins, and cell signaling molecules. Interacts with TOMM22. Interacts with IER5 (via N- and C-terminal regions). In terms of tissue distribution, brain.

The protein localises to the cytoplasm. It localises to the cytoskeleton. Its subcellular location is the membrane. In terms of biological role, the B regulatory subunit might modulate substrate selectivity and catalytic activity, and might also direct the localization of the catalytic enzyme to a particular subcellular compartment. This is Serine/threonine-protein phosphatase 2A 55 kDa regulatory subunit B beta isoform (PPP2R2B) from Oryctolagus cuniculus (Rabbit).